The primary structure comprises 371 residues: Alginate lyase (371 aa).

The signal sequence occupies residues 1–28 (MRRPMTLFKRISSPALLALALFGGAAHA). Residues 67–68 (SK), 140–141 (HT), and Tyr-258 each bind substrate.

Belongs to the polysaccharide lyase 5 family.

It is found in the periplasm. The enzyme catalyses Eliminative cleavage of alginate to give oligosaccharides with 4-deoxy-alpha-L-erythro-hex-4-enuronosyl groups at their non-reducing ends and beta-D-mannuronate at their reducing end.. Functionally, catalyzes the depolymerization of alginate by cleaving the beta-1,4 glycosidic bond between two adjacent sugar residues via a beta-elimination mechanism. May serve to degrade mislocalized alginate that is trapped in the periplasmic space. This chain is Alginate lyase, found in Pseudomonas putida (strain ATCC 47054 / DSM 6125 / CFBP 8728 / NCIMB 11950 / KT2440).